We begin with the raw amino-acid sequence, 1573 residues long: Synaptojanin-1 (1573 aa).

Residues 119–442 enclose the SAC domain; the sequence is VRKVLNSGNF…GDSISKIYAG (324 aa). The interval 500–899 is catalytic; that stretch reads GSLRVSEQTL…GPPDGTVLVS (400 aa). Ser-820 and Ser-830 each carry phosphoserine. Positions 902–971 constitute an RRM domain; sequence SSLPENNFFD…RTITIALKSP (70 aa). The span at 1029–1054 shows a compositional bias: low complexity; that stretch reads HLQPSSSSGLGTSPSSSPRTSPCQSP. Disordered stretches follow at residues 1029-1322, 1341-1360, 1370-1463, and 1535-1573; these read HLQP…PLKI, SVQT…QLPS, VSCM…GFKD, and SRRP…FTER. Ser-1053 is subject to Phosphoserine. Residues 1108–1130 are compositionally biased toward pro residues; the sequence is PPPPRPVAPPTRPAPPQRPPPPS. Ser-1150 and Ser-1178 each carry phosphoserine. Arg-1201 is modified (omega-N-methylarginine). Residue Thr-1220 is modified to Phosphothreonine. A compositionally biased stretch (polar residues) spans 1221–1234; that stretch reads PESQSKTSETSKGS. Residue Ser-1292 is modified to Phosphoserine. Positions 1293–1304 are enriched in low complexity; the sequence is SHSLPSEASSQP. Basic and acidic residues predominate over residues 1313–1322; it reads DGKRESPLKI. 2 positions are modified to phosphoserine: Ser-1318 and Ser-1345. Position 1349 is a phosphothreonine (Thr-1349). A compositionally biased stretch (polar residues) spans 1382–1407; the sequence is RSQSQENMRSSPNPFITGLTRTNPFS. A run of 3 repeats spans residues 1396–1398, 1406–1408, and 1417–1419. The segment at 1396–1419 is 3 X 3 AA repeats of N-P-F; it reads FITGLTRTNPFSDRTAAPGNPFRA. A compositionally biased stretch (pro residues) spans 1536 to 1555; sequence RRPPPPPVPLLPPGTSPPVD. Ser-1551 and Ser-1565 each carry phosphoserine.

Belongs to the synaptojanin family. The protein in the central section; belongs to the inositol 1,4,5-trisphosphate 5-phosphatase family. As to quaternary structure, interacts with ASH/GRB2. Interacts with PACSIN1, PACSIN2 and PACSIN3. Interacts with AMPH, SH3GL1, SH3GL2 and SH3GL3. Interacts with MYO1E (via SH3 domain). Interacts with BIN1 and DNM1. Interacts with EPS15.

Its subcellular location is the cytoplasm. The protein resides in the perinuclear region. The enzyme catalyses a 1,2-diacyl-sn-glycero-3-phospho-(1D-myo-inositol-4,5-bisphosphate) + H2O = a 1,2-diacyl-sn-glycero-3-phospho-(1D-myo-inositol 4-phosphate) + phosphate. In terms of biological role, phosphatase that acts on various phosphoinositides, including phosphatidylinositol 4-phosphate, phosphatidylinositol (4,5)-bisphosphate and phosphatidylinositol (3,4,5)-trisphosphate. Has a role in clathrin-mediated endocytosis. Hydrolyzes PIP2 bound to actin regulatory proteins resulting in the rearrangement of actin filaments downstream of tyrosine kinase and ASH/GRB2. In Homo sapiens (Human), this protein is Synaptojanin-1 (SYNJ1).